We begin with the raw amino-acid sequence, 660 residues long: MTDRIVPATLVFREDGTVVSPLYGDIYHSAAGALAQADHVFIRGNGLPERWRHERAFTIIETGFGTGCNFLATWAAWRADPSHCERLHFVSVEKHPFAREDLRRAAAHIVAYTTITTITPIAPLVDELANAWPALTPGVHRLEFDDGRVTLTLVFGDALDVLPNLALRAHAFYLDGFAPSKNADLWSPAIFKSLAKLADERATFATYTSSGAVKRALDEAGFAYRKVDGFAGKRAMLVGEFAPRWRVRRHEPPRAFSTDRRDAIVIGAGLAGCAVVERLAARGWHVTLIERRERIASEASGNPAGVFHPMIARDDNLAARLSRAGFLHALHRWRALERAGHAFSRSTHGLVQLATSDDEFERMRESIDALGVPAELASALSRDDARALLRTDVAHGGWLFAQGGSISPAALAAAQCAAAGDRLSRIVGVEIARLERGGDGRWRALDASGATIAQASVVVVANAADAARIAGLRHAPTQRVRGQLTLLPPGSAPAVPLPVIGDGYVVPLANGVTLTGATYEPDDTDATPREAGHRENLERLERLLPAFSANALDAGALAGRVGFRCVASDRLPLVGELGDEAAAAREAAALTGARLRDVPRATGLYGAFGYGSRGLVWAALGAELIAAQIDGEPWPLERELAEAIDPARFLVRALRHGRVA.

The interval 1–242 is tRNA (mnm(5)s(2)U34)-methyltransferase; that stretch reads MTDRIVPATL…KRAMLVGEFA (242 aa). An FAD-dependent cmnm(5)s(2)U34 oxidoreductase region spans residues 266–660; sequence IGAGLAGCAV…VRALRHGRVA (395 aa).

The protein in the N-terminal section; belongs to the methyltransferase superfamily. tRNA (mnm(5)s(2)U34)-methyltransferase family. It in the C-terminal section; belongs to the DAO family. FAD serves as cofactor.

The protein localises to the cytoplasm. The catalysed reaction is 5-aminomethyl-2-thiouridine(34) in tRNA + S-adenosyl-L-methionine = 5-methylaminomethyl-2-thiouridine(34) in tRNA + S-adenosyl-L-homocysteine + H(+). Functionally, catalyzes the last two steps in the biosynthesis of 5-methylaminomethyl-2-thiouridine (mnm(5)s(2)U) at the wobble position (U34) in tRNA. Catalyzes the FAD-dependent demodification of cmnm(5)s(2)U34 to nm(5)s(2)U34, followed by the transfer of a methyl group from S-adenosyl-L-methionine to nm(5)s(2)U34, to form mnm(5)s(2)U34. This is tRNA 5-methylaminomethyl-2-thiouridine biosynthesis bifunctional protein MnmC from Burkholderia pseudomallei (strain 1106a).